A 320-amino-acid chain; its full sequence is ATPase H(+)-transporting accessory protein 2 (320 aa).

The first 17 residues, 1–17 (MLRVFVIFSLFIAAINA), serve as a signal peptide directing secretion. The Lumenal portion of the chain corresponds to 18–277 (SGEFTVLNRP…YGSDYPVIFN (260 aa)). The helical transmembrane segment at 278 to 298 (IILWFMVVFGLSLLAICYAIA) threads the bilayer. Over 299–320 (AMDPGRDSIIYRMTSTRIKKDN) the chain is Cytoplasmic. The Mediates retrograde transport to the ER signature appears at 317–320 (KKDN).

Interacts with fz and fz2. Interacts (via N-terminus) with stan. As an accessory component of the multisubunit proton-transporting vacuolar (V)-ATPase protein pump, might interacts with VhaAC45. Post-translationally, proteolytically cleaved by a furin-like convertase in the trans-Golgi network to generate N- and C-terminal fragments. Cleavage is reduced in the fat body.

Its subcellular location is the cell membrane. It is found in the endoplasmic reticulum membrane. The protein localises to the vesicle. The protein resides in the apical cell membrane. It localises to the golgi apparatus membrane. Its subcellular location is the secreted. Multifunctional protein which functions as a transmembrane receptor in the planar cell polarity (PCP) and is involved in the assembly of the proton-transporting vacuolar (V)-ATPase protein pump. As transmembrane receptor mediates fz/PCP signaling through interaction with fz and stabilizes asymmetric PCP domains through its interaction with stan. Also mediates Wnt/beta-cat signaling through interaction with fz/fz2. Probably by controlling the assembly of the V-ATPase pump and thus the acidification of the endo-lysosomal system, plays a role in many neuronal processes including synapse morphology and synaptic transmission. Functionally, stabilizes asymmetric Planar Cell Polarity (PCP) domains through its interaction with stan. The polypeptide is ATPase H(+)-transporting accessory protein 2 (Drosophila melanogaster (Fruit fly)).